We begin with the raw amino-acid sequence, 208 residues long: Redox-sensing transcriptional repressor Rex (208 aa).

Positions 16 to 55 (VYSRYLENLYRKGITTVSSADIAQGVGVTSAQVRKDLAYF) form a DNA-binding region, H-T-H motif. Residue 90-95 (GAGNLG) participates in NAD(+) binding.

The protein belongs to the transcriptional regulatory Rex family. As to quaternary structure, homodimer.

Its subcellular location is the cytoplasm. Functionally, modulates transcription in response to changes in cellular NADH/NAD(+) redox state. In Carboxydothermus hydrogenoformans (strain ATCC BAA-161 / DSM 6008 / Z-2901), this protein is Redox-sensing transcriptional repressor Rex.